A 298-amino-acid polypeptide reads, in one-letter code: Aspartate carbamoyltransferase catalytic subunit (298 aa).

Carbamoyl phosphate-binding residues include Arg-50 and Thr-51. Lys-79 is an L-aspartate binding site. Residues Arg-100, His-128, and Gln-131 each coordinate carbamoyl phosphate. Positions 161 and 220 each coordinate L-aspartate. Carbamoyl phosphate is bound by residues Leu-259 and Pro-260.

It belongs to the aspartate/ornithine carbamoyltransferase superfamily. ATCase family. As to quaternary structure, heterooligomer of catalytic and regulatory chains.

It carries out the reaction carbamoyl phosphate + L-aspartate = N-carbamoyl-L-aspartate + phosphate + H(+). It participates in pyrimidine metabolism; UMP biosynthesis via de novo pathway; (S)-dihydroorotate from bicarbonate: step 2/3. Catalyzes the condensation of carbamoyl phosphate and aspartate to form carbamoyl aspartate and inorganic phosphate, the committed step in the de novo pyrimidine nucleotide biosynthesis pathway. The sequence is that of Aspartate carbamoyltransferase catalytic subunit from Sulfurisphaera tokodaii (strain DSM 16993 / JCM 10545 / NBRC 100140 / 7) (Sulfolobus tokodaii).